Consider the following 596-residue polypeptide: Nitrite reductase (596 aa).

The first 29 residues, 1–29 (MRQRTPFARPGLLASAALALVLGPLAVAA), serve as a signal peptide directing secretion. The N-terminal tail stretch occupies residues 30 to 76 (QEQAAPPKDPAAALEDHKTKTDNRYEPSLDNLAQQDVAALGAPEGIP). Histidine 46 contacts heme c. Heme d1 contacts are provided by tyrosine 54 and serine 57. The 86-residue stretch at 77–162 (ALSDAQYNEA…ANYLLLDPAA (86 aa)) folds into the Cytochrome c domain. Cysteine 94, cysteine 97, histidine 98, lysine 108, and tyrosine 122 together coordinate heme c. 10 residues coordinate heme d1: tryptophan 138, arginine 203, histidine 229, arginine 232, arginine 245, arginine 272, tyrosine 292, arginine 420, glutamine 536, and threonine 583. The interval 163-596 (PPEFGMKEMR…NVYNTMTDTY (434 aa)) is D1-heme domain.

In terms of assembly, homodimer. Heme c is required as a cofactor. The cofactor is heme.

Its subcellular location is the periplasm. It catalyses the reaction nitric oxide + Fe(III)-[cytochrome c] + H2O = Fe(II)-[cytochrome c] + nitrite + 2 H(+). It carries out the reaction A + NH4(+) + H2O = hydroxylamine + AH2 + H(+). In terms of biological role, inactivation of this cytochrome oxidase results in the loss of nitrite and nitric oxide reductase activities, but not of nitrous oxide reductase activity. The chain is Nitrite reductase (nirS) from Paracoccus denitrificans (strain Pd 1222).